The primary structure comprises 196 residues: FMN-dependent NADH:quinone oxidoreductase (196 aa).

Ser-10 serves as a coordination point for FMN.

The protein belongs to the azoreductase type 1 family. Homodimer. Requires FMN as cofactor.

It carries out the reaction 2 a quinone + NADH + H(+) = 2 a 1,4-benzosemiquinone + NAD(+). The catalysed reaction is N,N-dimethyl-1,4-phenylenediamine + anthranilate + 2 NAD(+) = 2-(4-dimethylaminophenyl)diazenylbenzoate + 2 NADH + 2 H(+). Functionally, quinone reductase that provides resistance to thiol-specific stress caused by electrophilic quinones. In terms of biological role, also exhibits azoreductase activity. Catalyzes the reductive cleavage of the azo bond in aromatic azo compounds to the corresponding amines. The chain is FMN-dependent NADH:quinone oxidoreductase from Cereibacter sphaeroides (strain ATCC 17023 / DSM 158 / JCM 6121 / CCUG 31486 / LMG 2827 / NBRC 12203 / NCIMB 8253 / ATH 2.4.1.) (Rhodobacter sphaeroides).